We begin with the raw amino-acid sequence, 542 residues long: MDTVHRDKDQVVILKKANYLPYLVNLFIPKLFYPEKIVVARLYLDVNKHDKQAAENFEGTETPCFDVPPSLFADKVPMDKIVFLPTSMLPMGFEAGGVFGPGILTRRSYPIDLKAAGHKGQTPPLFVGLRMEVQPPTRVESLLKKDGESQPIQDTLMNWLHASNDLINGAQPKGQELRDEFSLSMVFNLPIPPSPPSPYSYGRIPLQCNIYTPDLSNVLLLMSHQRDLTVAILSTVNNPHVPSVAFATMGDDAECPKFELPIGVFPICEGVNRPIFLPKRFMPKGFEAGCVIKPGTLSELWFMDYIGRFGPPQPQYNGSITPPLFVGKICREEPAVDMIKKIQFEIEKKASDDAESKATLAGVKPKFDISITKGFMVMETKEPKSPKGAYSVQNYDEAFDDGCIVRVVKKPATAEEATETRERNEMCTVGDQSQELDKCSTEADQKYLSCFHVDSDIDNIAMAMARLGIADMSLHADEEELCGIDGDNALIQLRHVLEDRNQIRSHTDQLMQDHIFRMNRDRMLALRQPFTCFGCGIHEKKQ.

Belongs to the DM7 family.

The protein is DM7 family protein CG15333 of Drosophila melanogaster (Fruit fly).